The sequence spans 265 residues: 4-hydroxy-tetrahydrodipicolinate reductase (265 aa).

NAD(+) is bound at residue G9–M14. K37 contributes to the NADP(+) binding site. NAD(+) contacts are provided by residues G99–T101 and A125–F128. Catalysis depends on H155, which acts as the Proton donor/acceptor. H156 contributes to the (S)-2,3,4,5-tetrahydrodipicolinate binding site. K159 serves as the catalytic Proton donor. G165–T166 provides a ligand contact to (S)-2,3,4,5-tetrahydrodipicolinate. Residues R178–E190 are compositionally biased toward basic and acidic residues. The tract at residues R178 to M200 is disordered.

This sequence belongs to the DapB family.

The protein localises to the cytoplasm. The enzyme catalyses (S)-2,3,4,5-tetrahydrodipicolinate + NAD(+) + H2O = (2S,4S)-4-hydroxy-2,3,4,5-tetrahydrodipicolinate + NADH + H(+). It carries out the reaction (S)-2,3,4,5-tetrahydrodipicolinate + NADP(+) + H2O = (2S,4S)-4-hydroxy-2,3,4,5-tetrahydrodipicolinate + NADPH + H(+). It functions in the pathway amino-acid biosynthesis; L-lysine biosynthesis via DAP pathway; (S)-tetrahydrodipicolinate from L-aspartate: step 4/4. In terms of biological role, catalyzes the conversion of 4-hydroxy-tetrahydrodipicolinate (HTPA) to tetrahydrodipicolinate. The polypeptide is 4-hydroxy-tetrahydrodipicolinate reductase (Oceanobacillus iheyensis (strain DSM 14371 / CIP 107618 / JCM 11309 / KCTC 3954 / HTE831)).